A 351-amino-acid chain; its full sequence is Holliday junction branch migration complex subunit RuvB (351 aa).

The tract at residues 1–182 (MNDRLITPDA…FGIVQRLEYY (182 aa)) is large ATPase domain (RuvB-L). Residues isoleucine 21, arginine 22, glycine 63, lysine 66, threonine 67, threonine 68, 129–131 (EDF), arginine 172, tyrosine 182, and arginine 219 each bind ATP. Mg(2+) is bound at residue threonine 67. A small ATPAse domain (RuvB-S) region spans residues 183-253 (NVADLSGIVK…VAHAAMELLN (71 aa)). A head domain (RuvB-H) region spans residues 256–351 (RNGFDEQDRR…QDAPPVGRER (96 aa)). DNA is bound by residues arginine 292, arginine 311, and arginine 316. The interval 328–351 (LNPPRQPDTSPDLFQDAPPVGRER) is disordered.

This sequence belongs to the RuvB family. In terms of assembly, homohexamer. Forms an RuvA(8)-RuvB(12)-Holliday junction (HJ) complex. HJ DNA is sandwiched between 2 RuvA tetramers; dsDNA enters through RuvA and exits via RuvB. An RuvB hexamer assembles on each DNA strand where it exits the tetramer. Each RuvB hexamer is contacted by two RuvA subunits (via domain III) on 2 adjacent RuvB subunits; this complex drives branch migration. In the full resolvosome a probable DNA-RuvA(4)-RuvB(12)-RuvC(2) complex forms which resolves the HJ.

The protein localises to the cytoplasm. It catalyses the reaction ATP + H2O = ADP + phosphate + H(+). Its function is as follows. The RuvA-RuvB-RuvC complex processes Holliday junction (HJ) DNA during genetic recombination and DNA repair, while the RuvA-RuvB complex plays an important role in the rescue of blocked DNA replication forks via replication fork reversal (RFR). RuvA specifically binds to HJ cruciform DNA, conferring on it an open structure. The RuvB hexamer acts as an ATP-dependent pump, pulling dsDNA into and through the RuvAB complex. RuvB forms 2 homohexamers on either side of HJ DNA bound by 1 or 2 RuvA tetramers; 4 subunits per hexamer contact DNA at a time. Coordinated motions by a converter formed by DNA-disengaged RuvB subunits stimulates ATP hydrolysis and nucleotide exchange. Immobilization of the converter enables RuvB to convert the ATP-contained energy into a lever motion, pulling 2 nucleotides of DNA out of the RuvA tetramer per ATP hydrolyzed, thus driving DNA branch migration. The RuvB motors rotate together with the DNA substrate, which together with the progressing nucleotide cycle form the mechanistic basis for DNA recombination by continuous HJ branch migration. Branch migration allows RuvC to scan DNA until it finds its consensus sequence, where it cleaves and resolves cruciform DNA. This Alkalilimnicola ehrlichii (strain ATCC BAA-1101 / DSM 17681 / MLHE-1) protein is Holliday junction branch migration complex subunit RuvB.